The following is a 130-amino-acid chain: Large ribosomal subunit protein bL19 (130 aa).

Belongs to the bacterial ribosomal protein bL19 family.

This protein is located at the 30S-50S ribosomal subunit interface and may play a role in the structure and function of the aminoacyl-tRNA binding site. The polypeptide is Large ribosomal subunit protein bL19 (Burkholderia orbicola (strain MC0-3)).